Consider the following 501-residue polypeptide: Probable cytosol aminopeptidase (501 aa).

Mn(2+)-binding residues include Lys267 and Asp272. The active site involves Lys279. 3 residues coordinate Mn(2+): Asp290, Asp349, and Glu351. The active site involves Arg353.

The protein belongs to the peptidase M17 family. Mn(2+) serves as cofactor.

The protein localises to the cytoplasm. It catalyses the reaction Release of an N-terminal amino acid, Xaa-|-Yaa-, in which Xaa is preferably Leu, but may be other amino acids including Pro although not Arg or Lys, and Yaa may be Pro. Amino acid amides and methyl esters are also readily hydrolyzed, but rates on arylamides are exceedingly low.. It carries out the reaction Release of an N-terminal amino acid, preferentially leucine, but not glutamic or aspartic acids.. Its function is as follows. Presumably involved in the processing and regular turnover of intracellular proteins. Catalyzes the removal of unsubstituted N-terminal amino acids from various peptides. This Desulfovibrio desulfuricans (strain ATCC 27774 / DSM 6949 / MB) protein is Probable cytosol aminopeptidase.